The following is a 525-amino-acid chain: Coronin-2A (525 aa).

5 WD repeats span residues 80 to 120 (GHRG…LTKN), 130 to 170 (GHAR…SVIM), 178 to 217 (CHQDVILSMSFNTNGSLLATACKDRKIRVLDPRAGTVLQE), 220 to 263 (YKGH…VPVT), and 269 to 308 (GSSGVLFPFYDADTNMLYVVGKGDRNIHYYEISANKPHLN). Residues 485–524 (QMFYRQQDEIRRLRELVTQREVQAKQLELEIRNLRMNSPR) are a coiled coil.

This sequence belongs to the WD repeat coronin family. In terms of assembly, binds actin. Component of the N-Cor repressor complex, at least composed of NCOR1, NCOR2, HDAC3, TBL1X, TBL1R, CORO2A and GPS2.

The chain is Coronin-2A (CORO2A) from Bos taurus (Bovine).